Consider the following 138-residue polypeptide: Large ribosomal subunit protein uL16 (138 aa).

Residues 1–17 (MLQPKRTKFRKQHKGRN) show a composition bias toward basic residues. A disordered region spans residues 1-22 (MLQPKRTKFRKQHKGRNRGVAT).

It belongs to the universal ribosomal protein uL16 family. As to quaternary structure, part of the 50S ribosomal subunit.

Its function is as follows. Binds 23S rRNA and is also seen to make contacts with the A and possibly P site tRNAs. This chain is Large ribosomal subunit protein uL16, found in Acidithiobacillus ferrooxidans (strain ATCC 23270 / DSM 14882 / CIP 104768 / NCIMB 8455) (Ferrobacillus ferrooxidans (strain ATCC 23270)).